A 241-amino-acid chain; its full sequence is MLSESLTKTKLIDPLILTLLQNIRGHRSNLENLKSIKIDPKLSNIISDKEGKELYIENEFHKAKGFRKLHIEVAEFSRRLKILHCVFFPDPHYDIPIFGMDLVKVNEVVSAAIVDLSPSSKNQNLKYDNLLSTIDKSVFESEREIPGWGDIFSQNVFFASLKNESEKSAFCKIVDHYLLVLIKLSKSSILDHDQEIIQERIDFQKNYCRQQMKNEKTSLVLLKYFDKKWVDEYIKKVLFDF.

Belongs to the HY2 family.

The catalysed reaction is (2R,3Z)-phycocyanobilin + 4 oxidized [2Fe-2S]-[ferredoxin] = biliverdin IXalpha + 4 reduced [2Fe-2S]-[ferredoxin] + 4 H(+). Functionally, catalyzes the four-electron reduction of biliverdin IX-alpha (2-electron reduction at both the A and D rings); the reaction proceeds via an isolatable 2-electron intermediate, 181,182-dihydrobiliverdin. This Prochlorococcus marinus (strain MIT 9515) protein is Phycocyanobilin:ferredoxin oxidoreductase.